Reading from the N-terminus, the 694-residue chain is Elongation factor G 2 (694 aa).

The 275-residue stretch at 8–282 (TAIRNIGIMA…AVVSYLPSPL (275 aa)) folds into the tr-type G domain. Residues 17–24 (AHIDAGKT), 81–85 (DTPGH), and 135–138 (NKMD) each bind GTP.

The protein belongs to the TRAFAC class translation factor GTPase superfamily. Classic translation factor GTPase family. EF-G/EF-2 subfamily.

The protein localises to the cytoplasm. Catalyzes the GTP-dependent ribosomal translocation step during translation elongation. During this step, the ribosome changes from the pre-translocational (PRE) to the post-translocational (POST) state as the newly formed A-site-bound peptidyl-tRNA and P-site-bound deacylated tRNA move to the P and E sites, respectively. Catalyzes the coordinated movement of the two tRNA molecules, the mRNA and conformational changes in the ribosome. The sequence is that of Elongation factor G 2 from Syntrophomonas wolfei subsp. wolfei (strain DSM 2245B / Goettingen).